Consider the following 235-residue polypeptide: Carbonic anhydrase 1 (235 aa).

One can recognise an Alpha-carbonic anhydrase domain in the interval 1 to 235; sequence GNKQSPVDIK…LKGRTVKASF (235 aa). His-40 acts as the Proton donor/acceptor in catalysis. Zn(2+)-binding residues include His-69, His-71, and His-94. Substrate-binding positions include Thr-174 and 174–175; that span reads TH.

This sequence belongs to the alpha-carbonic anhydrase family. Zn(2+) serves as cofactor.

It is found in the cytoplasm. It carries out the reaction hydrogencarbonate + H(+) = CO2 + H2O. It catalyses the reaction urea = cyanamide + H2O. With respect to regulation, inhibited by acetazolamide. Functionally, catalyzes the reversible hydration of carbon dioxide. Can hydrate cyanamide to urea. The sequence is that of Carbonic anhydrase 1 (CA1) from Oryctolagus cuniculus (Rabbit).